The sequence spans 112 residues: Nucleoid-associated protein FTM_1023 (112 aa).

This sequence belongs to the YbaB/EbfC family. As to quaternary structure, homodimer.

Its subcellular location is the cytoplasm. The protein localises to the nucleoid. Functionally, binds to DNA and alters its conformation. May be involved in regulation of gene expression, nucleoid organization and DNA protection. This is Nucleoid-associated protein FTM_1023 from Francisella tularensis subsp. mediasiatica (strain FSC147).